The sequence spans 345 residues: Phosphoribosylformylglycinamidine cyclo-ligase (345 aa).

It belongs to the AIR synthase family.

The protein resides in the cytoplasm. It carries out the reaction 2-formamido-N(1)-(5-O-phospho-beta-D-ribosyl)acetamidine + ATP = 5-amino-1-(5-phospho-beta-D-ribosyl)imidazole + ADP + phosphate + H(+). The protein operates within purine metabolism; IMP biosynthesis via de novo pathway; 5-amino-1-(5-phospho-D-ribosyl)imidazole from N(2)-formyl-N(1)-(5-phospho-D-ribosyl)glycinamide: step 2/2. The sequence is that of Phosphoribosylformylglycinamidine cyclo-ligase from Shewanella sediminis (strain HAW-EB3).